A 100-amino-acid polypeptide reads, in one-letter code: Large ribosomal subunit protein uL23 (100 aa).

The protein belongs to the universal ribosomal protein uL23 family. As to quaternary structure, part of the 50S ribosomal subunit. Contacts protein L29, and trigger factor when it is bound to the ribosome.

One of the early assembly proteins it binds 23S rRNA. One of the proteins that surrounds the polypeptide exit tunnel on the outside of the ribosome. Forms the main docking site for trigger factor binding to the ribosome. This chain is Large ribosomal subunit protein uL23, found in Shewanella piezotolerans (strain WP3 / JCM 13877).